A 404-amino-acid chain; its full sequence is MMLSRDLRAEAAVRLWIMFLLLEDLLGACAVGDYQRRVPSAPNTDIRNTLEKPRVTTQEVAGPHTLRYDLMALSLKLPELPQVLIWRYFDDEPFLHYNESSNRTDSWEPRIKRHWRAMTWARETEDLQEMVEQLKRMLAEVTGQKGQDKGLHILQATLGCELQRNGSTRGFWHLGYDGRNLLTFDQKTLTWTMDMPFTQQKKTFWEPRAPRADLVKTFLDDTCPAQLQRHLASLRSEPLDTGSPMVIVTFRNYPLGRVTLTCRAFNLYPHMATRGTLAWLQDRKLVKQKAFEPGTILPSGDRTYQIWVSIWVLPGQEPQFTCNLSYHGGNIEKRAVIVNTVSGEKTRQPSTSGVGGRVKKSLWTTMTTAFMVTSWTRKTGGDSTLLLLWWLLFFSTVLAVLTLV.

The first 30 residues, 1 to 30, serve as a signal peptide directing secretion; it reads MMLSRDLRAEAAVRLWIMFLLLEDLLGACA. The alpha-1 stretch occupies residues 59–150; sequence EVAGPHTLRY…VTGQKGQDKG (92 aa). Residues Asn-98, Asn-102, and Asn-165 are each glycosylated (N-linked (GlcNAc...) asparagine). The interval 151–242 is alpha-2; that stretch reads LHILQATLGC…SLRSEPLDTG (92 aa). Disulfide bonds link Cys-160–Cys-223 and Cys-262–Cys-322. Residues 224–338 form the Ig-like C1-type domain; that stretch reads PAQLQRHLAS…GNIEKRAVIV (115 aa). An alpha-3 region spans residues 243 to 342; the sequence is SPMVIVTFRN…KRAVIVNTVS (100 aa). Asn-323 is a glycosylation site (N-linked (GlcNAc...) asparagine). The segment at 343-373 is connecting peptide; it reads GEKTRQPSTSGVGGRVKKSLWTTMTTAFMVT. The GPI-anchor amidated serine moiety is linked to residue Ser-374. Positions 375–404 are cleaved as a propeptide — removed in mature form; it reads WTRKTGGDSTLLLLWWLLFFSTVLAVLTLV.

This sequence belongs to the MHC class I family. In terms of assembly, heterodimer with B2M. As to expression, detected in skin, esophagus, tongue, skin, muscle, uterus, ovary, testis and epididymis.

It localises to the cell membrane. The polypeptide is MHC class I-like protein MILL1 (Rattus norvegicus (Rat)).